Reading from the N-terminus, the 1174-residue chain is DNA-directed RNA polymerase subunit beta (1174 aa).

The protein belongs to the RNA polymerase beta chain family. As to quaternary structure, the RNAP catalytic core consists of 2 alpha, 1 beta, 1 beta' and 1 omega subunit. When a sigma factor is associated with the core the holoenzyme is formed, which can initiate transcription.

It carries out the reaction RNA(n) + a ribonucleoside 5'-triphosphate = RNA(n+1) + diphosphate. Its function is as follows. DNA-dependent RNA polymerase catalyzes the transcription of DNA into RNA using the four ribonucleoside triphosphates as substrates. The protein is DNA-directed RNA polymerase subunit beta of Mycolicibacterium gilvum (strain PYR-GCK) (Mycobacterium gilvum (strain PYR-GCK)).